A 91-amino-acid polypeptide reads, in one-letter code: Acylphosphatase (91 aa).

Residues 3-90 (QYRIIVDGRV…EGHHRFSIVY (88 aa)) form the Acylphosphatase-like domain. Active-site residues include R18 and N36.

Belongs to the acylphosphatase family.

The catalysed reaction is an acyl phosphate + H2O = a carboxylate + phosphate + H(+). The chain is Acylphosphatase (acyP) from Bacillus subtilis (strain 168).